A 166-amino-acid polypeptide reads, in one-letter code: Phosphopantetheine adenylyltransferase (166 aa).

Serine 11 contacts substrate. ATP is bound by residues 11–12 (SF) and histidine 19. Substrate is bound by residues lysine 43, alanine 76, and arginine 90. Residues 91-93 (GLR), glutamate 101, and 126-132 (LQPISSS) contribute to the ATP site.

It belongs to the bacterial CoaD family. In terms of assembly, homohexamer. It depends on Mg(2+) as a cofactor.

It is found in the cytoplasm. It carries out the reaction (R)-4'-phosphopantetheine + ATP + H(+) = 3'-dephospho-CoA + diphosphate. It participates in cofactor biosynthesis; coenzyme A biosynthesis; CoA from (R)-pantothenate: step 4/5. Its function is as follows. Reversibly transfers an adenylyl group from ATP to 4'-phosphopantetheine, yielding dephospho-CoA (dPCoA) and pyrophosphate. The polypeptide is Phosphopantetheine adenylyltransferase (Streptococcus equi subsp. zooepidemicus (strain H70)).